An 812-amino-acid chain; its full sequence is ATP-dependent zinc metalloprotease FtsH (812 aa).

Residues 1–21 (MPPSPPRPPKFPGSGRPESPN) are Cytoplasmic-facing. The chain crosses the membrane as a helical span at residues 22-42 (WGVWVMVLLIVGVLAFGFFTP). The Extracellular segment spans residues 43 to 241 (ESFGLGPRKE…TKFKRESGSW (199 aa)). A helical membrane pass occupies residues 242–262 (GGILLNLLPIVLILVILFFMF). Residues 263–812 (RAQSGGARGA…EFGKDGGEKK (550 aa)) are Cytoplasmic-facing. 333-340 (GAPGTGKT) serves as a coordination point for ATP. A Zn(2+)-binding site is contributed by His-555. The active site involves Glu-556. His-559 and Asp-631 together coordinate Zn(2+). The segment at 739 to 812 (KNPPARVTPP…EFGKDGGEKK (74 aa)) is disordered. 2 stretches are compositionally biased toward basic and acidic residues: residues 757-785 (QPGKDDSGHNEKKEAEETRADGAEERKME) and 803-812 (EFGKDGGEKK).

In the central section; belongs to the AAA ATPase family. This sequence in the C-terminal section; belongs to the peptidase M41 family. Homohexamer. It depends on Zn(2+) as a cofactor.

It localises to the cell membrane. In terms of biological role, acts as a processive, ATP-dependent zinc metallopeptidase for both cytoplasmic and membrane proteins. Plays a role in the quality control of integral membrane proteins. This is ATP-dependent zinc metalloprotease FtsH from Akkermansia muciniphila (strain ATCC BAA-835 / DSM 22959 / JCM 33894 / BCRC 81048 / CCUG 64013 / CIP 107961 / Muc).